Here is a 61-residue protein sequence, read N- to C-terminus: ATP synthase F(0) complex subunit 8 (61 aa).

Residues 10–32 (FMILSSTWLIYTIILQPKILSHL) form a helical membrane-spanning segment.

This sequence belongs to the ATPase protein 8 family. In terms of assembly, component of the ATP synthase complex composed at least of ATP5F1A/subunit alpha, ATP5F1B/subunit beta, ATP5MC1/subunit c (homooctomer), MT-ATP6/subunit a, MT-ATP8/subunit 8, ATP5ME/subunit e, ATP5MF/subunit f, ATP5MG/subunit g, ATP5MK/subunit k, ATP5MJ/subunit j, ATP5F1C/subunit gamma, ATP5F1D/subunit delta, ATP5F1E/subunit epsilon, ATP5PF/subunit F6, ATP5PB/subunit b, ATP5PD/subunit d, ATP5PO/subunit OSCP. ATP synthase complex consists of a soluble F(1) head domain (subunits alpha(3) and beta(3)) - the catalytic core - and a membrane F(0) domain - the membrane proton channel (subunits c, a, 8, e, f, g, k and j). These two domains are linked by a central stalk (subunits gamma, delta, and epsilon) rotating inside the F1 region and a stationary peripheral stalk (subunits F6, b, d, and OSCP).

It localises to the mitochondrion membrane. In terms of biological role, subunit 8, of the mitochondrial membrane ATP synthase complex (F(1)F(0) ATP synthase or Complex V) that produces ATP from ADP in the presence of a proton gradient across the membrane which is generated by electron transport complexes of the respiratory chain. ATP synthase complex consist of a soluble F(1) head domain - the catalytic core - and a membrane F(1) domain - the membrane proton channel. These two domains are linked by a central stalk rotating inside the F(1) region and a stationary peripheral stalk. During catalysis, ATP synthesis in the catalytic domain of F(1) is coupled via a rotary mechanism of the central stalk subunits to proton translocation. In vivo, can only synthesize ATP although its ATP hydrolase activity can be activated artificially in vitro. Part of the complex F(0) domain. The polypeptide is ATP synthase F(0) complex subunit 8 (Chelonia mydas (Green sea-turtle)).